The chain runs to 879 residues: MIIRRIDIENFLSHDRSLIEFKGTVNVIIGHNGAGKSSIIDAISFSLFRKSLRDAKKQEDLIKRGAGRATVTLYLENKGKIYVIKRNAPNQYTSEDTISELTNDTRRTIARGATTVSQKIKELLNLDEEVLKSTIIVGQGKIESVFENLPDVTKKILKIDKIEKLRDSNGPIKEVMDKINNKIIELQSLEKYKNESENQKIQKEKELENIKRELEDLNIKEEKERKKYEDIVKLNEEEEKKEKRYVELISLLNKLKDDISELREEVKDENRLREEKEKLEKDILEKDKLIEEKEKIIEAQNKIKLAQEKEKSLKTIKINLTDLEEKLKRKRELEEDYKKYIEIKGELEELEEKERKFNSLSDRLKSLKIKLSEIESKISNRKISINIEELDKELQKLNEDLNNKNQEREKLASQLGEIKGRIEELNKLLGNLNQVKGNVCPVCGRELSDDHKRKIQNEIIEKLKELDELNKKFKLEINKINGLISELNQIINKKSKEKDIAIRNLADYNNLLTQQQELRKEIEEIENEIERLSIYHEKYIRLKEEEKNLKPKYEEYLKYYDVTEEKIRELERQKIELEKEIEEIMNKVREYYNTDLTQKIRDIEKRIQEIKGKENKLRELDTLLAKIETAKQKIKQNEEEIKKLTDELQLLNFDPNRFQQIKREKEVLEKILGEINSKKGELLGKKEVLENDIKRLEEQIKDYEEKLKNKQKLITAYDKLKKLREHLAEDKLQAYLMNTVKSLVEDSLNSILSRFELSFTRVEVDFNDKNGIYAYTTSGQRLPVNLLSGGERVSIALALRLAIAKSLMNEVGFLILDEPTVNLDEYRKKELIDIIRSTVEVVPQIIVVTHDEELLQAGDYIIRLEKRGDSSKVEVINND.

ATP contacts are provided by residues 32 to 38 (NGAGKSS) and glutamine 139. 2 coiled-coil regions span residues 184–304 (IELQ…NKIK) and 342–436 (EIKG…NQVK). The Zinc-hook domain occupies 394–492 (LQKLNEDLNN…LISELNQIIN (99 aa)). 2 residues coordinate Zn(2+): cysteine 440 and cysteine 443. Residues 502-722 (IRNLADYNNL…LITAYDKLKK (221 aa)) are a coiled coil. 786-791 (LLSGGE) is a binding site for ATP.

This sequence belongs to the SMC family. RAD50 subfamily. In terms of assembly, homodimer. Forms a heterotetramer composed of two Mre11 subunits and two Rad50 subunits. The cofactor is Zn(2+).

Its function is as follows. Part of the Rad50/Mre11 complex, which is involved in the early steps of DNA double-strand break (DSB) repair. The complex may facilitate opening of the processed DNA ends to aid in the recruitment of HerA and NurA. Rad50 controls the balance between DNA end bridging and DNA resection via ATP-dependent structural rearrangements of the Rad50/Mre11 complex. This chain is DNA double-strand break repair Rad50 ATPase, found in Sulfurisphaera tokodaii (strain DSM 16993 / JCM 10545 / NBRC 100140 / 7) (Sulfolobus tokodaii).